Consider the following 483-residue polypeptide: Dual specificity protein kinase CLK1 (483 aa).

Residues 1-49 (MRHSKRTYCPDWDERDWDYGTWRSSSSHKRKKRSHSSAREQKRCRYDHS) are disordered. Basic residues predominate over residues 26–36 (SSHKRKKRSHS). Positions 29-33 (KRKKR) match the Nuclear localization signal motif. Basic and acidic residues predominate over residues 37-49 (SAREQKRCRYDHS). The residue at position 61 (serine 61) is a Phosphoserine. A compositionally biased stretch (low complexity) spans 84–111 (EPGHPYGEPGSRYQMHSSKSSGRSGRSS). Positions 84 to 146 (EPGHPYGEPG…SRSVEDDEEG (63 aa)) are disordered. The span at 112 to 137 (YKSKHRSRHHTSQHHSHGKSHRRKRS) shows a compositional bias: basic residues. Serine 139 is subject to Phosphoserine. Residues 160-476 (YEIVDTLGEG…LKEALKHPFF (317 aa)) enclose the Protein kinase domain. ATP-binding positions include 166–174 (LGEGAFGKV) and lysine 190. Aspartate 287 functions as the Proton acceptor in the catalytic mechanism.

It belongs to the protein kinase superfamily. CMGC Ser/Thr protein kinase family. Lammer subfamily. Interacts with PPIG and UBL5. Post-translationally, autophosphorylates on all three types of residues.

Its subcellular location is the nucleus. It carries out the reaction L-seryl-[protein] + ATP = O-phospho-L-seryl-[protein] + ADP + H(+). The catalysed reaction is L-threonyl-[protein] + ATP = O-phospho-L-threonyl-[protein] + ADP + H(+). The enzyme catalyses L-tyrosyl-[protein] + ATP = O-phospho-L-tyrosyl-[protein] + ADP + H(+). Regulates splicing of its own pre-mRNA according to its kinase activity; increased expression of the catalytically active form influences splicing to generate the catalytically inactive splicing variant lacking the kinase domain. Leucettine L41 inhibits its kinase activity and affects the regulation of alternative splicing mediated by phosphorylation of SR proteins. Dual specificity kinase acting on both serine/threonine and tyrosine-containing substrates. Phosphorylates serine- and arginine-rich (SR) proteins of the spliceosomal complex and may be a constituent of a network of regulatory mechanisms that enable SR proteins to control RNA splicing. Phosphorylates: SRSF1, SRSF3 and PTPN1. Regulates the alternative splicing of tissue factor (F3) pre-mRNA in endothelial cells. The chain is Dual specificity protein kinase CLK1 from Mus musculus (Mouse).